The following is a 303-amino-acid chain: MRLFNWRRQAVLNAMPLVKPDQVRTPWHEFWRRFRRQHMAMTAALFVILLIVVAIFARWIAPYDAENYFDYDNLNNGPSLQHWFGVDSLGRDIFSRVLVGAQISLAAGVFAVFIGVAIGTLLGLLAGYYEGWWDRLIMRICDVLFAFPGILLAIAVVAVLGSGIANVIIAVAIFSIPAFARLVRGNTLVLKQQTFIESARSIGASDMTILLRHILPGTVSSIVVFFTMRIGTSIISAASLSFLGLGAQPPTPEWGAMLNEARADMVIAPHVAVFPALAIFLTVLAFNLLGDGLRDALDPKIKG.

Helical transmembrane passes span 40–60, 105–125, 144–164, 165–185, 222–242, and 266–286; these read AMTA…ARWI, LAAG…LGLL, LFAF…GSGI, ANVI…LVRG, IVVF…SLSF, and VIAP…VLAF. The ABC transmembrane type-1 domain maps to 101–290; sequence AQISLAAGVF…LTVLAFNLLG (190 aa).

Belongs to the binding-protein-dependent transport system permease family. In terms of assembly, the complex is composed of two ATP-binding proteins (GsiA), two transmembrane proteins (GsiC and GsiD) and a solute-binding protein (GsiB).

The protein localises to the cell inner membrane. Its function is as follows. Part of the ABC transporter complex GsiABCD involved in glutathione import. Probably responsible for the translocation of the substrate across the membrane. In Shigella flexneri serotype 5b (strain 8401), this protein is Glutathione transport system permease protein GsiD.